We begin with the raw amino-acid sequence, 501 residues long: TGF-beta receptor type-1 (501 aa).

The N-terminal stretch at 1–29 is a signal peptide; sequence MEAASAALRRCLLLIVLVAAATLLPGAKA. Over 30 to 124 the chain is Extracellular; the sequence is LQCFCHLCTK…QSAGLGPVEL (95 aa). Disulfide bonds link C32-C50, C34-C37, C44-C67, C82-C94, and C95-C100. N41 carries N-linked (GlcNAc...) asparagine glycosylation. Residues 125–145 form a helical membrane-spanning segment; it reads AAVIAGPVCFVCIALMLMVYI. At 146-501 the chain is on the cytoplasmic side; the sequence is CHNRTVIHHR…QLSQQEGIKM (356 aa). S163 is subject to Phosphoserine. Residues 173–202 enclose the GS domain; the sequence is TTLKDLIYDMTTSGSGSGLPLLVQRTIART. Phosphothreonine; by TGFBR2 occurs at positions 183 and 184. 3 positions are modified to phosphoserine; by TGFBR2: S185, S187, and S189. Residues 191 to 192 carry the FKBP1A-binding motif; that stretch reads LP. Residues 203 to 493 enclose the Protein kinase domain; the sequence is IVLQESIGKG…LRIKKTLSQL (291 aa). ATP is bound by residues 209–217 and K230; that span reads IGKGRFGEV. The active-site Proton acceptor is D331. Residue K389 forms a Glycyl lysine isopeptide (Lys-Gly) (interchain with G-Cter in SUMO) linkage.

The protein belongs to the protein kinase superfamily. TKL Ser/Thr protein kinase family. TGFB receptor subfamily. Homodimer; in the endoplasmic reticulum but also at the cell membrane. Heterohexamer; TGFB1, TGFB2 and TGFB3 homodimeric ligands assemble a functional receptor composed of two TGFBR1 and TGFBR2 heterodimers to form a ligand-receptor heterohexamer. The respective affinity of TGBRB1 and TGFBR2 for the ligands may modulate the kinetics of assembly of the receptor and may explain the different biological activities of TGFB1, TGFB2 and TGFB3. Component of a complex composed of TSC22D1 (via N-terminus), TGFBR1 and TGFBR2; the interaction between TSC22D1 and TGFBR1 is inhibited by SMAD7 and promoted by TGFB1. Interacts with CD109; inhibits TGF-beta receptor activation in keratinocytes. Interacts with RBPMS. Interacts with SMAD2, SMAD3 and ZFYVE9; ZFYVE9 recruits SMAD2 and SMAD3 to the TGF-beta receptor. Interacts with TRAF6 and MAP3K7; induces MAP3K7 activation by TRAF6. Interacts with PARD6A; involved in TGF-beta induced epithelial to mesenchymal transition. Interacts with NEDD4L. Interacts with SMAD7, SMURF1 and SMURF2; SMAD7 recruits NEDD4L, SMURF1 and SMURF2 to the TGF-beta receptor. Interacts with USP15 and VPS39. Interacts (unphosphorylated) with FKBP1A; prevents TGFBR1 phosphorylation by TGFBR2 and stabilizes it in the inactive conformation. Interacts with SDCBP (via C-terminus). Interacts with CAV1 and this interaction is impaired in the presence of SDCBP. Interacts with APPL1; interaction is TGF beta dependent; mediates trafficking of the TGFBR1 from the endosomes to the nucleus via microtubules in a TRAF6-dependent manner. Interacts with GPR50; this interaction promotes the constitutive activation of SMAD signaling pathway. Mg(2+) serves as cofactor. It depends on Mn(2+) as a cofactor. In terms of processing, phosphorylated at basal levels in the absence of ligand. Activated upon phosphorylation by TGFBR2, mainly in the GS domain. Phosphorylation in the GS domain abrogates FKBP1A-binding. N-Glycosylated. Post-translationally, ubiquitinated; undergoes ubiquitination catalyzed by several E3 ubiquitin ligases including SMURF1, SMURF2 and NEDD4L2. Results in the proteasomal and/or lysosomal degradation of the receptor thereby negatively regulating its activity. Deubiquitinated by USP15, leading to stabilization of the protein and enhanced TGF-beta signal. Its ubiquitination and proteasome-mediated degradation is negatively regulated by SDCBP. As to expression, urogenital ridge, testis, ovary, brain and lungs.

The protein resides in the cell membrane. The protein localises to the cell junction. It is found in the tight junction. It localises to the membrane raft. Its subcellular location is the cell surface. It carries out the reaction L-threonyl-[receptor-protein] + ATP = O-phospho-L-threonyl-[receptor-protein] + ADP + H(+). The enzyme catalyses L-seryl-[receptor-protein] + ATP = O-phospho-L-seryl-[receptor-protein] + ADP + H(+). With respect to regulation, kept in an inactive conformation by FKBP1A preventing receptor activation in absence of ligand. CD109 is another inhibitor of the receptor. Its function is as follows. Transmembrane serine/threonine kinase forming with the TGF-beta type II serine/threonine kinase receptor, TGFBR2, the non-promiscuous receptor for the TGF-beta cytokines TGFB1, TGFB2 and TGFB3. Transduces the TGFB1, TGFB2 and TGFB3 signal from the cell surface to the cytoplasm and is thus regulating a plethora of physiological and pathological processes including cell cycle arrest in epithelial and hematopoietic cells, control of mesenchymal cell proliferation and differentiation, wound healing, extracellular matrix production, immunosuppression and carcinogenesis. The formation of the receptor complex composed of 2 TGFBR1 and 2 TGFBR2 molecules symmetrically bound to the cytokine dimer results in the phosphorylation and the activation of TGFBR1 by the constitutively active TGFBR2. Activated TGFBR1 phosphorylates SMAD2 which dissociates from the receptor and interacts with SMAD4. The SMAD2-SMAD4 complex is subsequently translocated to the nucleus where it modulates the transcription of the TGF-beta-regulated genes. This constitutes the canonical SMAD-dependent TGF-beta signaling cascade. Also involved in non-canonical, SMAD-independent TGF-beta signaling pathways. For instance, TGFBR1 induces TRAF6 autoubiquitination which in turn results in MAP3K7 ubiquitination and activation to trigger apoptosis. Also regulates epithelial to mesenchymal transition through a SMAD-independent signaling pathway through PARD6A phosphorylation and activation. The polypeptide is TGF-beta receptor type-1 (Tgfbr1) (Rattus norvegicus (Rat)).